The following is a 133-amino-acid chain: Large ribosomal subunit protein bL12 (133 aa).

It belongs to the bacterial ribosomal protein bL12 family. Homodimer. Part of the ribosomal stalk of the 50S ribosomal subunit. Forms a multimeric L10(L12)X complex, where L10 forms an elongated spine to which 2 to 4 L12 dimers bind in a sequential fashion. Binds GTP-bound translation factors.

In terms of biological role, forms part of the ribosomal stalk which helps the ribosome interact with GTP-bound translation factors. Is thus essential for accurate translation. The sequence is that of Large ribosomal subunit protein bL12 from Ehrlichia chaffeensis (strain ATCC CRL-10679 / Arkansas).